A 131-amino-acid polypeptide reads, in one-letter code: Small ribosomal subunit protein eS8 (131 aa).

The disordered stretch occupies residues 1–37 (MKLGAFYKGGDLKKPSGGKKRRVRRTKKKALGGGPPQ). Positions 16-30 (SGGKKRRVRRTKKKA) are enriched in basic residues.

It belongs to the eukaryotic ribosomal protein eS8 family. Part of the 30S ribosomal subunit.

This chain is Small ribosomal subunit protein eS8, found in Pyrobaculum neutrophilum (strain DSM 2338 / JCM 9278 / NBRC 100436 / V24Sta) (Thermoproteus neutrophilus).